A 279-amino-acid chain; its full sequence is Methyltransferase prhM (279 aa).

S-adenosyl-L-methionine contacts are provided by residues 124-125 (DI) and 152-153 (DV).

The protein belongs to the class I-like SAM-binding methyltransferase superfamily.

It functions in the pathway secondary metabolite biosynthesis; terpenoid biosynthesis. In terms of biological role, methyltransferase; part of the gene cluster that mediates the biosynthesis of paraherquonin, a meroterpenoid with a unique, highly congested hexacyclic molecular architecture. The first step of the pathway is the synthesis of 3,5-dimethylorsellinic acid (DMOA) by the polyketide synthase prhL. Synthesis of DMOA is followed by farnesylation by the prenyltransferase prhE, methylesterification by the methyl-transferase prhM, epoxidation of the prenyl chain by the flavin-dependent monooxygenase prhF, and cyclization of the farnesyl moiety by the terpene cyclase prhH, to yield the tetracyclic intermediate, protoaustinoid A. The short chain dehydrogenase prhI then oxidizes the C-3 alcohol group of the terpene cyclase product to transform protoaustinoid A into protoaustinoid B. The FAD-binding monooxygenase prhJ catalyzes the oxidation of protoaustinoid B into preaustinoid A which is further oxidized into preaustinoid A1 by FAD-binding monooxygenase phrK. Finally, prhA leads to berkeleydione via the berkeleyone B intermediate. PrhA is a multifunctional dioxygenase that first desaturates at C5-C6 to form berkeleyone B, followed by rearrangement of the A/B-ring to form the cycloheptadiene moiety in berkeleydione. Berkeleydione serves as the key intermediate for the biosynthesis of paraherquonin as well as many other meroterpenoids. The cytochrome P450 monooxygenases prhB, prhD, and prhN, as well as the isomerase prhC, are probably involved in the late stage of paraherquonin biosynthesis, after the production of berkeleydione. Especially prhC might be a multifunctional enzyme that catalyzes the D-ring expansion via intramolecular methoxy rearrangement, as well as the hydrolysis of the expanded D-ring. The sequence is that of Methyltransferase prhM from Penicillium brasilianum.